The sequence spans 154 residues: Myoglobin (154 aa).

In terms of domain architecture, Globin spans 2-148; the sequence is GLSDGEWQLV…FRKDIAAKYK (147 aa). Residue Ser4 is modified to Phosphoserine. His65 provides a ligand contact to nitrite. His65 serves as a coordination point for O2. At Thr68 the chain carries Phosphothreonine. His94 lines the heme b pocket.

Belongs to the globin family. In terms of assembly, monomeric.

The protein localises to the cytoplasm. Its subcellular location is the sarcoplasm. It carries out the reaction Fe(III)-heme b-[protein] + nitric oxide + H2O = Fe(II)-heme b-[protein] + nitrite + 2 H(+). The catalysed reaction is H2O2 + AH2 = A + 2 H2O. Its function is as follows. Monomeric heme protein which primary function is to store oxygen and facilitate its diffusion within muscle tissues. Reversibly binds oxygen through a pentacoordinated heme iron and enables its timely and efficient release as needed during periods of heightened demand. Depending on the oxidative conditions of tissues and cells, and in addition to its ability to bind oxygen, it also has a nitrite reductase activity whereby it regulates the production of bioactive nitric oxide. Under stress conditions, like hypoxia and anoxia, it also protects cells against reactive oxygen species thanks to its pseudoperoxidase activity. The chain is Myoglobin (MB) from Globicephala melas (Long-finned pilot whale).